Reading from the N-terminus, the 522-residue chain is F-box-like/WD repeat-containing protein TBL1XR1-B (522 aa).

The region spanning 4-36 (SSDEVNFLVYRYLQESGFSHSAFTFGIESHISQ) is the LisH domain. Residues 41 to 86 (GALVPPAALISIIQKGLQYVEAEVSINEDGTLFDGRPIESLSLIDA) enclose the F-box-like domain. Positions 122–150 (ATSANNQQPPAKNGESTANGEENGGHALA) are disordered. Positions 123–141 (TSANNQQPPAKNGESTANG) are enriched in polar residues. WD repeat units lie at residues 175-214 (GHESEVFICAWNPVSDLLASGSGDSTARIWNLSENSTSGS), 231-270 (PSNKDVTSLDWNSEGTLLATGSYDGFARIWTKDGNLASTL), 272-311 (QHKGPIFALKWNKKGNFILSAGVDKTTIIWDAHTGEAKQQ), 314-352 (FHSAPALDVDWQSNNTFASCSTDMCIHVCKLGQDRPIKT), 355-394 (GHTNEVNAIKWDPTGNLLASCSDDMTLKIWSMKHDTCVHD), 397-445 (AHNK…CIHT), 448-487 (KHQEPVYSVAFSPDGRYLASGSFDKCVHIWNTQTGALVHS), and 489-522 (RGTGGIFEVCWNAAGDKVGASASDGSVCVLDLRK).

The protein belongs to the WD repeat EBI family. Interacts with heterodimers of rxra and thrb, and this interaction is abrogated by thyroid hormone binding to thrb. Interacts with ncor1.

It localises to the nucleus. Functionally, F-box-like protein which acts as an integral component of the N-CoR transcriptional corepressor complex. Probably regulates transcription activation mediated by nuclear receptors. May mediate the recruitment of the 19S proteasome complex, leading to the subsequent proteasomal degradation of the N-CoR complex, thereby allowing cofactor exchange and transcription activation. In Xenopus laevis (African clawed frog), this protein is F-box-like/WD repeat-containing protein TBL1XR1-B (tbl1xr1-b).